The primary structure comprises 68 residues: Putative membrane protein insertion efficiency factor (68 aa).

This sequence belongs to the UPF0161 family.

The protein localises to the cell inner membrane. Functionally, could be involved in insertion of integral membrane proteins into the membrane. The protein is Putative membrane protein insertion efficiency factor of Aquifex aeolicus (strain VF5).